Here is a 155-residue protein sequence, read N- to C-terminus: MEEREDAPKDFIKLKSEKLSVGEVSELVVSPYCGAVSLFIGTTRNNFEGKKVIHLEYEAYTSMAETEMKKICRDVRQKWPSVKHIAVHHRLGVVPITEASVIIAVSSPHRAESLEAVMYCINTLKASVPIWKKEIYEDEYSWKENKECFWANSEK.

Substrate contacts are provided by residues 109–110 (HR), lysine 125, and 132–134 (KKE).

Belongs to the MoaE family. MOCS2B subfamily. In terms of assembly, heterotetramer; composed of 2 small (MOCS2A) and 2 large (MOCS2B) subunits.

It is found in the cytoplasm. Its subcellular location is the cytosol. It catalyses the reaction 2 [molybdopterin-synthase sulfur-carrier protein]-C-terminal-Gly-aminoethanethioate + cyclic pyranopterin phosphate + H2O = molybdopterin + 2 [molybdopterin-synthase sulfur-carrier protein]-C-terminal Gly-Gly + 2 H(+). It participates in cofactor biosynthesis; molybdopterin biosynthesis. Its function is as follows. Catalytic subunit of the molybdopterin synthase complex, a complex that catalyzes the conversion of precursor Z into molybdopterin. Acts by mediating the incorporation of 2 sulfur atoms from thiocarboxylated MOCS2A into precursor Z to generate a dithiolene group. The protein is Molybdopterin synthase catalytic subunit of Taeniopygia guttata (Zebra finch).